Consider the following 111-residue polypeptide: Large ribosomal subunit protein uL22 (111 aa).

Belongs to the universal ribosomal protein uL22 family. In terms of assembly, part of the 50S ribosomal subunit.

Its function is as follows. This protein binds specifically to 23S rRNA; its binding is stimulated by other ribosomal proteins, e.g. L4, L17, and L20. It is important during the early stages of 50S assembly. It makes multiple contacts with different domains of the 23S rRNA in the assembled 50S subunit and ribosome. The globular domain of the protein is located near the polypeptide exit tunnel on the outside of the subunit, while an extended beta-hairpin is found that lines the wall of the exit tunnel in the center of the 70S ribosome. This Francisella tularensis subsp. tularensis (strain FSC 198) protein is Large ribosomal subunit protein uL22.